The sequence spans 441 residues: Ribosomal protein uS12 methylthiotransferase RimO (441 aa).

The MTTase N-terminal domain maps to Pro-8–Pro-118. The [4Fe-4S] cluster site is built by Cys-17, Cys-53, Cys-82, Cys-150, Cys-154, and Cys-157. The Radical SAM core domain occupies Leu-136–Glu-373. The region spanning Gln-376–Val-441 is the TRAM domain.

Belongs to the methylthiotransferase family. RimO subfamily. [4Fe-4S] cluster is required as a cofactor.

The protein localises to the cytoplasm. It carries out the reaction L-aspartate(89)-[ribosomal protein uS12]-hydrogen + (sulfur carrier)-SH + AH2 + 2 S-adenosyl-L-methionine = 3-methylsulfanyl-L-aspartate(89)-[ribosomal protein uS12]-hydrogen + (sulfur carrier)-H + 5'-deoxyadenosine + L-methionine + A + S-adenosyl-L-homocysteine + 2 H(+). Its function is as follows. Catalyzes the methylthiolation of an aspartic acid residue of ribosomal protein uS12. The chain is Ribosomal protein uS12 methylthiotransferase RimO from Salmonella paratyphi B (strain ATCC BAA-1250 / SPB7).